The following is a 444-amino-acid chain: Glutamyl-tRNA(Gln) amidotransferase subunit D (444 aa).

Residues 92 to 424 (SEIKIISTGG…EKIQNLMITN (333 aa)) form the Asparaginase/glutaminase domain. Residues Thr-102, Thr-178, Asp-179, and Lys-257 contribute to the active site.

The protein belongs to the asparaginase 1 family. GatD subfamily. As to quaternary structure, heterodimer of GatD and GatE.

It catalyses the reaction L-glutamyl-tRNA(Gln) + L-glutamine + ATP + H2O = L-glutaminyl-tRNA(Gln) + L-glutamate + ADP + phosphate + H(+). Its function is as follows. Allows the formation of correctly charged Gln-tRNA(Gln) through the transamidation of misacylated Glu-tRNA(Gln) in organisms which lack glutaminyl-tRNA synthetase. The reaction takes place in the presence of glutamine and ATP through an activated gamma-phospho-Glu-tRNA(Gln). The GatDE system is specific for glutamate and does not act on aspartate. This chain is Glutamyl-tRNA(Gln) amidotransferase subunit D, found in Saccharolobus solfataricus (strain ATCC 35092 / DSM 1617 / JCM 11322 / P2) (Sulfolobus solfataricus).